A 2032-amino-acid chain; its full sequence is Cytoskeleton-associated protein 5 (2032 aa).

TOG regions lie at residues 1–223, 268–502, and 588–817; these read MGDD…KLPT, YELL…LVHG, and SIEV…GQSP. Residue Lys-48 is modified to N6-acetyllysine. HEAT repeat units follow at residues 159–197, 356–394, and 434–472; these read IISL…WNRD, GQYA…TTTL, and KSLL…VVGE. The segment at 501 to 579 is disordered; it reads HGKKSGLATE…GTKNKKGLET (79 aa). The HEAT 4 repeat unit spans residues 750–788; the sequence is ELNVKAFISNVKTALAATNPAVRTSAITLLGVMYLYVGP. The interval 811-848 is disordered; it reads KMQGQSPPAPTRGIAKHSTSATDEGEDGEEPGEGGNDV. Ser-816 is modified (phosphoserine). The segment covering 833–842 has biased composition (acidic residues); the sequence is DEGEDGEEPG. TOG stretches follow at residues 853–1081 and 1193–1428; these read PRIE…ANMP and IEQL…KRPS. HEAT repeat units follow at residues 855–893, 936–974, and 1013–1051; these read IEIS…EAKF, RQHV…QTGM, and PTDL…HLGY. Residues 1078-1095 are compositionally biased toward low complexity; it reads ANMPSKPAAPAKAMSKPM. The segment at 1078–1156 is disordered; it reads ANMPSKPAAP…KTTLKEDDDK (79 aa). 3 HEAT repeats span residues 1284–1322, 1324–1357, and 1361–1399; these read ENEA…VYPA, KMFP…SYGM, and QPTP…VHGD. The disordered stretch occupies residues 1420–1459; sequence IKRSAKRPSAAPVKQAEEKPQRTQNINSNANMLRKGPAED. Residues 1441-1450 show a composition bias toward polar residues; it reads RTQNINSNAN. Ser-1469 carries the phosphoserine modification. Positions 1801 to 1822 are disordered; the sequence is SMDQTGSKSDKETEKGASRIDE. A compositionally biased stretch (basic and acidic residues) spans 1808–1822; that stretch reads KSDKETEKGASRIDE. Ser-1861 bears the Phosphoserine mark. Disordered stretches follow at residues 1893-1926 and 1948-2032; these read SKGR…GNTN and LDNT…SSRK. Residues 1909-1921 show a composition bias toward low complexity; that stretch reads VTCVPTPTSTVSS. The interaction with TACC3 stretch occupies residues 1932–1957; it reads PSVYLERLKILRQRCGLDNTKQDDRP. A compositionally biased stretch (polar residues) spans 1972–1983; it reads ASSTDMLHSKLS. Basic and acidic residues predominate over residues 1984 to 1997; the sequence is QLRESREQHQHSDL. The span at 2002–2015 shows a compositional bias: low complexity; sequence THSAGTMTSSSSTT. Residues 2018–2032 are compositionally biased toward basic and acidic residues; the sequence is DDLKKRLERIKSSRK.

This sequence belongs to the TOG/XMAP215 family. As to quaternary structure, interacts with TACC1. Interacts with HNRNPA2B1. Interacts with TACC3 independently of clathrin. Interacts with TACC3 and clathrin forming the TACC3/ch-TOG/clathrin complex located at spindle inter-microtubules bridges. Interacts with NDC80; indicative for an association with the NDC80 complex. Interacts with SLAIN2. Interacts with SLAIN1.

The protein localises to the cytoplasm. It localises to the cytoskeleton. It is found in the microtubule organizing center. The protein resides in the centrosome. Its subcellular location is the spindle pole. The protein localises to the spindle. It localises to the chromosome. It is found in the centromere. The protein resides in the kinetochore. Its function is as follows. Binds to the plus end of microtubules and regulates microtubule dynamics and microtubule organization. Acts as a processive microtubule polymerase. Promotes cytoplasmic microtubule nucleation and elongation. Plays a major role in organizing spindle poles. In spindle formation protects kinetochore microtubules from depolymerization by KIF2C and has an essential role in centrosomal microtubule assembly independently of KIF2C activity. Contributes to centrosome integrity. Acts as a component of the TACC3/ch-TOG/clathrin complex proposed to contribute to stabilization of kinetochore fibers of the mitotic spindle by acting as inter-microtubule bridge. The TACC3/ch-TOG/clathrin complex is required for the maintenance of kinetochore fiber tension. Enhances the strength of NDC80 complex-mediated kinetochore-tip microtubule attachments. The chain is Cytoskeleton-associated protein 5 from Mus musculus (Mouse).